We begin with the raw amino-acid sequence, 209 residues long: COP9 signalosome complex subunit 8 (209 aa).

The PCI domain occupies 8 to 179 (ESAFSFKKLL…GALDVSFNKF (172 aa)). Ser175 is subject to Phosphoserine.

Belongs to the CSN8 family. In terms of assembly, component of the CSN complex, composed of COPS1/GPS1, COPS2, COPS3, COPS4, COPS5, COPS6, COPS7 (COPS7A or COPS7B), COPS8 and COPS9 isoform 1. In the complex, it probably interacts directly with COPS3, COPS4 and COPS7 (COPS7A or COPS7B).

The protein resides in the cytoplasm. Its subcellular location is the nucleus. Component of the COP9 signalosome complex (CSN), a complex involved in various cellular and developmental processes. The CSN complex is an essential regulator of the ubiquitin (Ubl) conjugation pathway by mediating the deneddylation of the cullin subunits of SCF-type E3 ligase complexes, leading to decrease the Ubl ligase activity of SCF-type complexes such as SCF, CSA or DDB2. The complex is also involved in phosphorylation of p53/TP53, c-jun/JUN, IkappaBalpha/NFKBIA, ITPK1 and IRF8/ICSBP, possibly via its association with CK2 and PKD kinases. CSN-dependent phosphorylation of TP53 and JUN promotes and protects degradation by the Ubl system, respectively. This chain is COP9 signalosome complex subunit 8 (COPS8), found in Homo sapiens (Human).